A 383-amino-acid polypeptide reads, in one-letter code: Acetylornithine deacetylase (383 aa).

Histidine 80 contributes to the Zn(2+) binding site. Aspartate 82 is an active-site residue. Aspartate 112 lines the Zn(2+) pocket. The active site involves glutamate 144. Positions 145, 169, and 355 each coordinate Zn(2+).

Belongs to the peptidase M20A family. ArgE subfamily. In terms of assembly, homodimer. Zn(2+) serves as cofactor. Requires Co(2+) as cofactor. Glutathione is required as a cofactor.

The protein localises to the cytoplasm. The enzyme catalyses N(2)-acetyl-L-ornithine + H2O = L-ornithine + acetate. The protein operates within amino-acid biosynthesis; L-arginine biosynthesis; L-ornithine from N(2)-acetyl-L-ornithine (linear): step 1/1. Its function is as follows. Catalyzes the hydrolysis of the amide bond of N(2)-acetylated L-amino acids. Cleaves the acetyl group from N-acetyl-L-ornithine to form L-ornithine, an intermediate in L-arginine biosynthesis pathway, and a branchpoint in the synthesis of polyamines. The chain is Acetylornithine deacetylase from Shigella flexneri.